The primary structure comprises 437 residues: Serine hydroxymethyltransferase 2 (437 aa).

(6S)-5,6,7,8-tetrahydrofolate contacts are provided by residues Leu-125 and 129–131 (GHL). Residue Lys-234 is modified to N6-(pyridoxal phosphate)lysine.

The protein belongs to the SHMT family. As to quaternary structure, homodimer. Pyridoxal 5'-phosphate is required as a cofactor.

It localises to the cytoplasm. The enzyme catalyses (6R)-5,10-methylene-5,6,7,8-tetrahydrofolate + glycine + H2O = (6S)-5,6,7,8-tetrahydrofolate + L-serine. It functions in the pathway one-carbon metabolism; tetrahydrofolate interconversion. Its pathway is amino-acid biosynthesis; glycine biosynthesis; glycine from L-serine: step 1/1. Catalyzes the reversible interconversion of serine and glycine with tetrahydrofolate (THF) serving as the one-carbon carrier. This reaction serves as the major source of one-carbon groups required for the biosynthesis of purines, thymidylate, methionine, and other important biomolecules. Also exhibits THF-independent aldolase activity toward beta-hydroxyamino acids, producing glycine and aldehydes, via a retro-aldol mechanism. This chain is Serine hydroxymethyltransferase 2, found in Mesorhizobium japonicum (strain LMG 29417 / CECT 9101 / MAFF 303099) (Mesorhizobium loti (strain MAFF 303099)).